A 206-amino-acid polypeptide reads, in one-letter code: Outer-membrane lipoprotein carrier protein (206 aa).

Positions 1–21 are cleaved as a signal peptide; that stretch reads MKKLLCAVLLSPLLYSNAVLA.

The protein belongs to the LolA family. Monomer.

The protein resides in the periplasm. Participates in the translocation of lipoproteins from the inner membrane to the outer membrane. Only forms a complex with a lipoprotein if the residue after the N-terminal Cys is not an aspartate (The Asp acts as a targeting signal to indicate that the lipoprotein should stay in the inner membrane). This is Outer-membrane lipoprotein carrier protein from Shewanella sp. (strain MR-4).